The chain runs to 249 residues: 5'-nucleotidase SurE (249 aa).

4 residues coordinate a divalent metal cation: Asp8, Asp9, Ser39, and Asn91.

Belongs to the SurE nucleotidase family. It depends on a divalent metal cation as a cofactor.

It localises to the cytoplasm. The enzyme catalyses a ribonucleoside 5'-phosphate + H2O = a ribonucleoside + phosphate. In terms of biological role, nucleotidase that shows phosphatase activity on nucleoside 5'-monophosphates. The chain is 5'-nucleotidase SurE from Pseudomonas paraeruginosa (strain DSM 24068 / PA7) (Pseudomonas aeruginosa (strain PA7)).